The following is a 441-amino-acid chain: MSSTMLDDVDNNMMGIKSISLYELLSDVVKQGDKTRLVTAGPEQVLPDLIRHITETIPFDLFINLKNEMNDARNLVTRLNWLGKFLNDNFLQNHTFPFTILRICELCYDPFKYYKINELEKFVNALEKCCMVTSSWQVFDKTHGEKQEDDKEKDINFIKNQEDVSLMKIPWMTENNTRELAPFIREIDSIMSVNLGYDDEDEEEGFFDGDEDREMGNKSKRNVLLKDENFMVEEYYEDDCGINDDNSDNKGQNCQSDVTKNNSDDEDDDDNDDDYREDGADEDDEDDDHMGSTDDDEDDDEDRQAGESTKVQNFDKKNETPRKRKPTDLDNFEYDESPSFTNMDLTTPKKYKHTATGRFSIIESPSSSLLNAMDGSNEISSSQEEEKEDAHENHEGRSEGLLPGDELVSPSMSSSQEDKMVAIAGITYRENISSPLGKKSR.

Positions 201–213 (DEEEGFFDGDEDR) are enriched in acidic residues. 3 disordered regions span residues 201–220 (DEEE…NKSK), 242–348 (INDD…LTTP), and 364–418 (SPSS…SQED). Residues 249 to 261 (NKGQNCQSDVTKN) are compositionally biased toward polar residues. The span at 264-302 (DDEDDDDNDDDYREDGADEDDEDDDHMGSTDDDEDDDED) shows a compositional bias: acidic residues. The residue at position 347 (threonine 347) is a Phosphothreonine. Residues 388 to 398 (EDAHENHEGRS) show a composition bias toward basic and acidic residues.

Belongs to the PPP4R2 family. In terms of assembly, regulatory subunit (R2) of the histone H2A phosphatase complex (HTP-C) consisting of PPH3, PSY2 and PSY4. Interacts with SPT4 and SPT5.

It is found in the nucleus. In terms of biological role, regulatory subunit of the histone H2A phosphatase complex, which dephosphorylates H2AS128ph (gamma-H2A) that has been displaced from sites of DNA lesions in the double-stranded DNA break repair process. Dephosphorylation is necessary for efficient recovery from the DNA damage checkpoint. In Saccharomyces cerevisiae (strain ATCC 204508 / S288c) (Baker's yeast), this protein is Serine/threonine-protein phosphatase 4 regulatory subunit 2 (PSY4).